The chain runs to 111 residues: Ribulose bisphosphate carboxylase small subunit (111 aa).

It belongs to the RuBisCO small chain family. Heterohexadecamer of 8 large and 8 small subunits. The CcmM short form purifies from carboxysomes in complex with both RuBisCO subunits; a second complex with full-length CcmM and RuBisCO also includes carbonic anhydrase (CA, ccaA). RuBisCO-CcmM complexes are probably associated with the carboxysome shell. Isolated reduced and oxidized SSUL1 binds holo-RuBisCO (RbcL(8)-RbcS(8)) but not either subunit octamer alone; RuBisCO has a higher affinity for reduced SSUL1.

Its subcellular location is the carboxysome. Functionally, ruBisCO catalyzes two reactions: the carboxylation of D-ribulose 1,5-bisphosphate, the primary event in carbon dioxide fixation, as well as the oxidative fragmentation of the pentose substrate in the photorespiration process. Both reactions occur simultaneously and in competition at the same active site. Beta-carboxysome assembly initiates when soluble RuBisCO aggregates is condensed into a liquid matrix in a pre-carboxysome by the RbcS-like domains of probably both CcmM58 and CcmM35. CcmN interacts with the N-terminus of CcmM58, and then recruits the CcmK2 major shell protein via CcmN's encapsulation peptide. Shell formation requires CcmK proteins and CcmO. CcmL caps the otherwise elongated carboxysome. Once fully encapsulated carboxysomes are formed, they migrate within the cell probably via interactions with the cytoskeleton. This Synechococcus elongatus (strain ATCC 33912 / PCC 7942 / FACHB-805) (Anacystis nidulans R2) protein is Ribulose bisphosphate carboxylase small subunit.